The chain runs to 435 residues: Zinc metalloproteinase/disintegrin (435 aa).

Positions 1-26 are excised as a propeptide; it reads KMCGVTQNWESYESTKKASQLNLTPE. Pyrrolidone carboxylic acid is present on Gln-27. One can recognise a Peptidase M12B domain in the interval 33-227; it reads RYIKLGIFVD…HNFQCILNAP (195 aa). Asn-115 carries an N-linked (GlcNAc...) asparagine glycan. Cystine bridges form between Cys-144–Cys-222, Cys-184–Cys-206, and Cys-186–Cys-189. His-169 lines the Zn(2+) pocket. Glu-170 is an active-site residue. Zn(2+) contacts are provided by His-173 and His-179. The propeptide occupies 228–243; sequence LRTDTVSTPVSGNELL. The Disintegrin domain maps to 235–318; that stretch reads TPVSGNELLE…DCPTDDFHRN (84 aa). The Ca(2+) site is built by Val-237, Asn-240, Leu-242, Glu-244, Glu-247, and Asp-250. 6 cysteine pairs are disulfide-bonded: Cys-249/Cys-264, Cys-251/Cys-259, Cys-258/Cys-281, Cys-272/Cys-278, Cys-277/Cys-303, and Cys-290/Cys-310. Positions 296 to 298 match the D/ECD-tripeptide motif; sequence ECD.

It belongs to the venom metalloproteinase (M12B) family. P-III subfamily. P-IIIb sub-subfamily. Monomer. It depends on Zn(2+) as a cofactor. In terms of processing, the N-terminus of the metalloproteinase is blocked. Expressed by the venom gland.

It is found in the secreted. Inhibited by EDTA. Functionally, cleaves the alpha chain of fibrinogen (FGA) preferentially and cleaves the beta chain (FGB) either on longer incubation or at high concentrations. Induces apoptosis of endothelial cells (prior to cell detachment). In terms of biological role, disintegrin: inhibits platelet aggregation induced by ADP, thrombin, platelet-activating factor and collagen. Acts by inhibiting fibrinogen interaction with platelet receptors GPIIb/GPIIIa (ITGA2B/ITGB3). In Craspedocephalus gramineus (Bamboo pit viper), this protein is Zinc metalloproteinase/disintegrin.